The primary structure comprises 276 residues: Undecaprenyl-diphosphatase (276 aa).

The next 7 helical transmembrane spans lie at 46-66 (AGASFAAVIQLGSLGAVLIYF), 94-114 (LMGILVGTLPIVIAGWAVKAI), 122-142 (LWVVAAAAIGLALALGWAERV), 152-172 (LGIGDGLWVGLAQALALIPGV), 196-216 (SFLLGIPALFLAGVAEFIAEF), 226-246 (LGTLSAFVFSYGSIDWLIRFL), and 253-273 (VFIVYRIGFGLFIFLGLALGF).

The protein belongs to the UppP family.

It is found in the cell inner membrane. It catalyses the reaction di-trans,octa-cis-undecaprenyl diphosphate + H2O = di-trans,octa-cis-undecaprenyl phosphate + phosphate + H(+). Catalyzes the dephosphorylation of undecaprenyl diphosphate (UPP). Confers resistance to bacitracin. This chain is Undecaprenyl-diphosphatase, found in Synechococcus sp. (strain JA-3-3Ab) (Cyanobacteria bacterium Yellowstone A-Prime).